The sequence spans 349 residues: MLPSLQSLTKKVLAGQCLPTDQYYLLKCYDLWWYDSPITFDHNLGLIKSAGIKDGLDLNTALVKAVRENNYNLIKLFTEWGADINYGLVSVNTEHTRDLCRELGAKETLNEEEILRIFIDLKFYKTSSNIILCHEVFSNNPLLQKVNNLKMRIEIFWELRELIKKTDLLNNEFSLNTLLLKYWYAIAVRYNLKEAIQYFYQKYTHLNTWRLTCALCFNNVFDLHEAYEKDKIYMDLEEMMRVACIKDHNLSTIYYCYVLGANINQAMLASIQYYNIENMFFCMDLGADVFEENMPVGEGYELIRNILSLKIYSPSTAPLPKNTDPEIIDHVLKNYKSKNMMTFLSYDLR.

An ANK repeat occupies 57–89 (DLNTALVKAVRENNYNLIKLFTEWGADINYGLV).

Belongs to the asfivirus MGF 360 family.

Plays a role in virus cell tropism, and may be required for efficient virus replication in macrophages. The chain is Protein MGF 360-12L from African swine fever virus (isolate Tick/Malawi/Lil 20-1/1983) (ASFV).